We begin with the raw amino-acid sequence, 311 residues long: Aspartate carbamoyltransferase catalytic subunit (311 aa).

2 residues coordinate carbamoyl phosphate: R55 and T56. Residue K85 participates in L-aspartate binding. Residues R106, H135, and Q138 each coordinate carbamoyl phosphate. L-aspartate contacts are provided by R168 and R230. 2 residues coordinate carbamoyl phosphate: L268 and P269.

It belongs to the aspartate/ornithine carbamoyltransferase superfamily. ATCase family. In terms of assembly, heterododecamer (2C3:3R2) of six catalytic PyrB chains organized as two trimers (C3), and six regulatory PyrI chains organized as three dimers (R2).

It catalyses the reaction carbamoyl phosphate + L-aspartate = N-carbamoyl-L-aspartate + phosphate + H(+). It functions in the pathway pyrimidine metabolism; UMP biosynthesis via de novo pathway; (S)-dihydroorotate from bicarbonate: step 2/3. Its function is as follows. Catalyzes the condensation of carbamoyl phosphate and aspartate to form carbamoyl aspartate and inorganic phosphate, the committed step in the de novo pyrimidine nucleotide biosynthesis pathway. In Klebsiella pneumoniae subsp. pneumoniae (strain ATCC 700721 / MGH 78578), this protein is Aspartate carbamoyltransferase catalytic subunit.